Consider the following 225-residue polypeptide: MTTQSQFLVNLSYGGLASQSNLRANNRVSPSSCQITRTNRSWALPVSFKVEKFQLQRGRRRRGSPCFGESEGLVKNGIGDADGIIIVDHGSRRRESNLMLEEFVKMFKEKTGYPIVEPAHMELAEPSIKDAFSLCVQQGAKRVVVSPFFLFPGRHWHTDIPSLTADAAKEFSGISYLITAPLGPHNLLLDVVNDRIQHCLSHVEGDADECLVCAGTNKCKLYNSS.

The N-terminal 46 residues, 1–46 (MTTQSQFLVNLSYGGLASQSNLRANNRVSPSSCQITRTNRSWALPV), are a transit peptide targeting the chloroplast. The Fe cation site is built by H89 and H155. [4Fe-4S] cluster-binding residues include C199, C210, C213, and C219.

This sequence belongs to the CbiX family. SirB subfamily. Homodimer. [4Fe-4S] cluster serves as cofactor.

It is found in the plastid. It localises to the chloroplast. It carries out the reaction siroheme + 2 H(+) = sirohydrochlorin + Fe(2+). The protein operates within porphyrin-containing compound metabolism; siroheme biosynthesis; siroheme from sirohydrochlorin: step 1/1. Chelates iron to the siroheme precursor. Catalyzes the last step of the siroheme biosynthesis. Unlike its counterparts in bacteria, contains an [Fe-S] cluster which is not involved directly in the enzymatic reaction, but may play regulatory role in iron, sulfur and tetrapyrrole metabolism. The [Fe-S] cluster is required for normal plant growth. The sequence is that of Sirohydrochlorin ferrochelatase, chloroplastic from Arabidopsis thaliana (Mouse-ear cress).